The chain runs to 234 residues: Probable transcriptional regulatory protein PSPTO_3162 (234 aa).

It belongs to the TACO1 family.

The protein localises to the cytoplasm. This chain is Probable transcriptional regulatory protein PSPTO_3162, found in Pseudomonas syringae pv. tomato (strain ATCC BAA-871 / DC3000).